The chain runs to 210 residues: Protein RFS1 (210 aa).

The region spanning 4 to 203 (VAILIYSVDD…RVHQLQGKAF (200 aa)) is the Flavodoxin-like domain.

Belongs to the WrbA family.

It is found in the cytoplasm. The protein localises to the membrane raft. The protein is Protein RFS1 (RFS1) of Saccharomyces cerevisiae (strain ATCC 204508 / S288c) (Baker's yeast).